Here is a 383-residue protein sequence, read N- to C-terminus: Processive diacylglycerol beta-glucosyltransferase (383 aa).

This sequence belongs to the glycosyltransferase 28 family. UgtP subfamily.

The protein resides in the cell membrane. It catalyses the reaction a 1,2-diacyl-3-O-(beta-D-glucopyranosyl)-sn-glycerol + UDP-alpha-D-glucose = a 1,2-diacyl-3-O-(beta-D-Glc-(1-&gt;6)-beta-D-Glc)-sn-glycerol + UDP + H(+). The catalysed reaction is a 1,2-diacyl-3-O-(beta-D-Glc-(1-&gt;6)-beta-D-Glc)-sn-glycerol + UDP-alpha-D-glucose = a 1,2-diacyl-3-O-(beta-D-Glc-(1-&gt;6)-beta-D-Glc-(1-&gt;6)-beta-D-Glc)-sn-glycerol + UDP + H(+). It carries out the reaction a 1,2-diacyl-sn-glycerol + UDP-alpha-D-glucose = a 1,2-diacyl-3-O-(beta-D-glucopyranosyl)-sn-glycerol + UDP + H(+). The protein operates within glycolipid metabolism; diglucosyl-diacylglycerol biosynthesis. Functionally, processive glucosyltransferase involved in the biosynthesis of both the bilayer- and non-bilayer-forming membrane glucolipids. Is able to successively transfer up to three glucosyl residues to diacylglycerol (DAG), thereby catalyzing the formation of beta-monoglucosyl-DAG (3-O-(beta-D-glucopyranosyl)-1,2-diacyl-sn-glycerol), beta-diglucosyl-DAG (3-O-(beta-D-glucopyranosyl-beta-(1-&gt;6)-D-glucopyranosyl)-1,2-diacyl-sn-glycerol) and beta-triglucosyl-DAG (3-O-(beta-D-glucopyranosyl-beta-(1-&gt;6)-D-glucopyranosyl-beta-(1-&gt;6)-D-glucopyranosyl)-1,2-diacyl-sn-glycerol). Beta-diglucosyl-DAG is the predominant glycolipid found in Bacillales and is also used as a membrane anchor for lipoteichoic acid (LTA). The chain is Processive diacylglycerol beta-glucosyltransferase from Bacillus licheniformis (strain ATCC 14580 / DSM 13 / JCM 2505 / CCUG 7422 / NBRC 12200 / NCIMB 9375 / NCTC 10341 / NRRL NRS-1264 / Gibson 46).